Here is a 351-residue protein sequence, read N- to C-terminus: Lipopolysaccharide core biosynthesis mannosyltransferase LpsB (351 aa).

The protein belongs to the glycosyltransferase group 1 family. Glycosyltransferase 4 subfamily.

The protein operates within bacterial outer membrane biogenesis; LPS core biosynthesis. Its function is as follows. Acts at transfer of mannose group to a 3-deoxy-D-mono octulonic acid (KDO) via an alpha-1,5 linkage. This Rhizobium meliloti (strain 1021) (Ensifer meliloti) protein is Lipopolysaccharide core biosynthesis mannosyltransferase LpsB (lpsB).